Consider the following 332-residue polypeptide: CMRF35-like molecule 9 (332 aa).

An N-terminal signal peptide occupies residues 1 to 18 (MRLLVLLWGCLLLPGYEA). The Ig-like V-type domain maps to 19–121 (LEGPEEISGF…RGPDESLLIS (103 aa)). Residues 19–247 (LEGPEEISGF…KPRVSIPMVR (229 aa)) lie on the Extracellular side of the membrane. Residues Cys37 and Cys107 are joined by a disulfide bond. N-linked (GlcNAc...) asparagine glycosylation occurs at Asn96. O-linked (GalNAc...) threonine glycosylation is found at Thr137, Thr143, Thr144, Thr155, Thr161, Thr170, Thr171, Thr177, Thr187, and Thr195. Residues 146-239 (LQPKAKAQQT…PALSSGSSKP (94 aa)) form a disordered region. Over residues 147 to 158 (QPKAKAQQTQPP) the composition is skewed to low complexity. Positions 168–181 (AATTAKQGKTGAEA) are enriched in low complexity. Residues 186-205 (GTSQYGHERTSQYTGTSPHP) are compositionally biased toward polar residues. The O-linked (GalNAc...) serine glycan is linked to Ser196. O-linked (GalNAc...) threonine glycans are attached at residues Thr199 and Thr201. Residue Ser202 is glycosylated (O-linked (GalNAc...) serine). O-linked (GalNAc...) threonine glycosylation occurs at Thr207. Ser208, Ser213, Ser214, and Ser222 each carry an O-linked (GalNAc...) serine glycan. Polar residues predominate over residues 220–239 (LDSTSAEDTSPALSSGSSKP). Thr223 carries O-linked (GalNAc...) threonine glycosylation. The O-linked (GalNAc...) serine glycan is linked to Ser224. Thr228 carries an O-linked (GalNAc...) threonine glycan. 2 O-linked (GalNAc...) serine glycosylation sites follow: Ser229 and Ser237. A helical transmembrane segment spans residues 248–268 (ILAPVLVLLSLLSAAGLIAFC). The Cytoplasmic segment spans residues 269 to 332 (SHLLLWRKEA…ELGFSKFVSA (64 aa)).

It belongs to the CD300 family. O-glycosylated with sialylated oligosaccharides. Highly expressed in heart, skeletal muscle and placenta.

It localises to the apical cell membrane. Its subcellular location is the basolateral cell membrane. The protein resides in the endosome. It is found in the multivesicular body membrane. In terms of biological role, receptor which may mediate L-selectin-dependent lymphocyte rollings. Binds SELL in a calcium dependent manner. Binds lymphocyte. The polypeptide is CMRF35-like molecule 9 (CD300LG) (Homo sapiens (Human)).